Reading from the N-terminus, the 103-residue chain is GIISLILQIGNIISIWVSHSIQTGSQNHTGICNQRIITYENSTWVNQTYVNISNTNVVAGKDTTSMTLAGNSSLCPIRGWAIYSKDNSIRIGSKGDVFVIREP.

Residues G1–S18 form a helical; Signal-anchor for type II membrane protein membrane-spanning segment. The Virion surface segment spans residues H19–P103. N27, N41, N46, N51, and N71 each carry an N-linked (GlcNAc...) asparagine; by host glycan. R101 contacts substrate.

This sequence belongs to the glycosyl hydrolase 34 family. Homotetramer. The cofactor is Ca(2+). N-glycosylated.

The protein localises to the virion membrane. The protein resides in the host apical cell membrane. The enzyme catalyses Hydrolysis of alpha-(2-&gt;3)-, alpha-(2-&gt;6)-, alpha-(2-&gt;8)- glycosidic linkages of terminal sialic acid residues in oligosaccharides, glycoproteins, glycolipids, colominic acid and synthetic substrates.. Inhibited by the neuraminidase inhibitors zanamivir (Relenza) and oseltamivir (Tamiflu). These drugs interfere with the release of progeny virus from infected cells and are effective against all influenza strains. Resistance to neuraminidase inhibitors is quite rare. Functionally, catalyzes the removal of terminal sialic acid residues from viral and cellular glycoconjugates. Cleaves off the terminal sialic acids on the glycosylated HA during virus budding to facilitate virus release. Additionally helps virus spread through the circulation by further removing sialic acids from the cell surface. These cleavages prevent self-aggregation and ensure the efficient spread of the progeny virus from cell to cell. Otherwise, infection would be limited to one round of replication. Described as a receptor-destroying enzyme because it cleaves a terminal sialic acid from the cellular receptors. May facilitate viral invasion of the upper airways by cleaving the sialic acid moieties on the mucin of the airway epithelial cells. Likely to plays a role in the budding process through its association with lipid rafts during intracellular transport. May additionally display a raft-association independent effect on budding. Plays a role in the determination of host range restriction on replication and virulence. Sialidase activity in late endosome/lysosome traffic seems to enhance virus replication. This Influenza A virus (strain A/Camel/Mongolia/1982 H1N1) protein is Neuraminidase (NA).